A 377-amino-acid chain; its full sequence is F-box protein At2g05970 (377 aa).

In terms of domain architecture, F-box spans 8–55; that stretch reads ASWSELCPDVLRCVFELLSFSDLNRTRSVCSSWHSASRHCVPTQNQIP.

The protein is F-box protein At2g05970 of Arabidopsis thaliana (Mouse-ear cress).